Reading from the N-terminus, the 254-residue chain is 5'-nucleotidase SurE (254 aa).

A divalent metal cation contacts are provided by Asp-8, Asp-9, Ser-40, and Asn-93.

The protein belongs to the SurE nucleotidase family. A divalent metal cation serves as cofactor.

It is found in the cytoplasm. It carries out the reaction a ribonucleoside 5'-phosphate + H2O = a ribonucleoside + phosphate. Nucleotidase that shows phosphatase activity on nucleoside 5'-monophosphates. In Methylorubrum extorquens (strain CM4 / NCIMB 13688) (Methylobacterium extorquens), this protein is 5'-nucleotidase SurE.